A 292-amino-acid polypeptide reads, in one-letter code: Elongation factor Ts (292 aa).

Positions 82–85 are involved in Mg(2+) ion dislocation from EF-Tu; the sequence is TDFV.

The protein belongs to the EF-Ts family.

It localises to the cytoplasm. Associates with the EF-Tu.GDP complex and induces the exchange of GDP to GTP. It remains bound to the aminoacyl-tRNA.EF-Tu.GTP complex up to the GTP hydrolysis stage on the ribosome. The polypeptide is Elongation factor Ts (Bordetella avium (strain 197N)).